A 127-amino-acid chain; its full sequence is Holo-[acyl-carrier-protein] synthase (127 aa).

2 residues coordinate Mg(2+): Asp9 and Glu58.

The protein belongs to the P-Pant transferase superfamily. AcpS family. Requires Mg(2+) as cofactor.

It localises to the cytoplasm. It catalyses the reaction apo-[ACP] + CoA = holo-[ACP] + adenosine 3',5'-bisphosphate + H(+). Its function is as follows. Transfers the 4'-phosphopantetheine moiety from coenzyme A to a Ser of acyl-carrier-protein. The sequence is that of Holo-[acyl-carrier-protein] synthase from Shewanella sp. (strain MR-4).